A 542-amino-acid chain; its full sequence is Putative cysteine ligase BshC (542 aa).

Residues Leu458 to Ala479 adopt a coiled-coil conformation.

The protein belongs to the BshC family.

Functionally, involved in bacillithiol (BSH) biosynthesis. May catalyze the last step of the pathway, the addition of cysteine to glucosamine malate (GlcN-Mal) to generate BSH. This is Putative cysteine ligase BshC from Geobacillus sp. (strain WCH70).